The chain runs to 333 residues: MAHIPVLLKEMLLQLSPQNGGIYVDATFGAGGYSKAILESADCKVYAIDRDKTVIKFYEDLNIKYPSRVKLFIEKFSNIRSILDSNSLEYLVEPSAVSKLSSIISSGIQKKNIWISASSTGVTPSNTVDGVVFDIGVSSMQLDDGDRGFSFLHDGPLDMRMDNSSHTNASTFVNALREEEIANTIYNYGGERHSRRIARAIVNARKKKTIKTTFELANIVRSVVFRGKSKIDPATRTFQAIRIWVNDELGELEKGIKAASEILNKNGKLIVVTFHSLEDRIVKTFFKSLCEPRSIDCKVFSLLNKKMIKASAEEVNANPRSRSAKLRAIQRLS.

S-adenosyl-L-methionine-binding positions include 31 to 33 (GGY), Asp-49, Phe-76, Asp-134, and Gln-141.

It belongs to the methyltransferase superfamily. RsmH family.

It localises to the cytoplasm. The catalysed reaction is cytidine(1402) in 16S rRNA + S-adenosyl-L-methionine = N(4)-methylcytidine(1402) in 16S rRNA + S-adenosyl-L-homocysteine + H(+). In terms of biological role, specifically methylates the N4 position of cytidine in position 1402 (C1402) of 16S rRNA. The polypeptide is Ribosomal RNA small subunit methyltransferase H (Wolbachia sp. subsp. Brugia malayi (strain TRS)).